The sequence spans 71 residues: MTVLHVQEIRDMTPAEREAELDDLKTELLNARAVQAAGGAPENPGRIKELRKAIARIKTIQGEEGDLQENE.

Belongs to the universal ribosomal protein uL29 family. Part of the 50S ribosomal subunit. Interacts with protein L23.

In terms of biological role, stabilizes the tertiary rRNA structure within the 23S rRNA domain (domain I) to which it binds. Located at the polypeptide exit tunnel on the outside of the subunit. The polypeptide is Large ribosomal subunit protein uL29 (rpl29) (Haloarcula marismortui (strain ATCC 43049 / DSM 3752 / JCM 8966 / VKM B-1809) (Halobacterium marismortui)).